Reading from the N-terminus, the 273-residue chain is Hydroxyethylthiazole kinase (273 aa).

Met-41 is a binding site for substrate. ATP contacts are provided by Arg-117 and Thr-170. Residue Gly-197 coordinates substrate.

Belongs to the Thz kinase family. It depends on Mg(2+) as a cofactor.

It catalyses the reaction 5-(2-hydroxyethyl)-4-methylthiazole + ATP = 4-methyl-5-(2-phosphooxyethyl)-thiazole + ADP + H(+). The protein operates within cofactor biosynthesis; thiamine diphosphate biosynthesis; 4-methyl-5-(2-phosphoethyl)-thiazole from 5-(2-hydroxyethyl)-4-methylthiazole: step 1/1. Its function is as follows. Catalyzes the phosphorylation of the hydroxyl group of 4-methyl-5-beta-hydroxyethylthiazole (THZ). This is Hydroxyethylthiazole kinase from Clostridium acetobutylicum (strain ATCC 824 / DSM 792 / JCM 1419 / IAM 19013 / LMG 5710 / NBRC 13948 / NRRL B-527 / VKM B-1787 / 2291 / W).